Here is a 602-residue protein sequence, read N- to C-terminus: Beta-(1--&gt;2)glucan export ATP-binding/permease protein NdvA (602 aa).

One can recognise an ABC transmembrane type-1 domain in the interval 21–311; the sequence is GWVLAGANLL…VVGFVNSVFM (291 aa). 6 helical membrane passes run 22–42, 68–88, 146–166, 167–187, 238–258, and 285–305; these read WVLA…PVLF, LLLA…AVAL, EHFA…YINW, RLAL…TLVV, LLAM…ITRA, and IVMF…VVGF. An ABC transporter domain is found at 345 to 579; that stretch reads VEFDNVSFSY…RGYFAELAHA (235 aa). Residue 378-385 coordinates ATP; the sequence is GATGAGKS.

This sequence belongs to the ABC transporter superfamily. Beta-(1--&gt;2)glucan exporter (TC 3.A.1.108.1) family. Homodimer.

Its subcellular location is the cell inner membrane. It carries out the reaction [(1-&gt;2)-beta-D-glucosyl](n)(in) + ATP + H2O = [(1-&gt;2)-beta-D-glucosyl](n)(out) + ADP + phosphate + H(+). Its function is as follows. Involved in Beta-(1--&gt;2)glucan export. Transmembrane domains (TMD) form a pore in the inner membrane and the ATP-binding domain (NBD) is responsible for energy generation. The sequence is that of Beta-(1--&gt;2)glucan export ATP-binding/permease protein NdvA from Rhodopseudomonas palustris (strain BisA53).